Here is a 383-residue protein sequence, read N- to C-terminus: DNA dC-&gt;dU-editing enzyme APOBEC-3G (383 aa).

The tract at residues 1-60 (MKPHFRNTVERMYRGTFFYNFNNRPILSRRNTVWLCYEVKTRGPSMPTWGAKIFRGQLYP) is essential for cytoplasmic localization. CMP/dCMP-type deaminase domains lie at 29–138 (RRNT…LRIL) and 214–327 (GQRE…LRTL). Phosphothreonine; by PKA is present on Thr-32. The Zn(2+) site is built by His-65, Cys-97, and Cys-100. The tract at residues 209-335 (KPWVSGQRET…TLHRDGAKIA (127 aa)) is necessary for homooligomerization. An interaction with DNA region spans residues 213-215 (SGQ). Phosphothreonine; by PKA and CAMK2 is present on Thr-218. His-257 contacts Zn(2+). Glu-259 functions as the Proton donor in the catalytic mechanism. Positions 287 and 290 each coordinate Zn(2+). The interaction with DNA stretch occupies residues 312-319 (RIYDDQGR).

This sequence belongs to the cytidine and deoxycytidylate deaminase family. Homodimer. Homooligomer. Can bind RNA to form ribonucleoprotein complexes of high-molecular-mass (HMM) or low-molecular-mass (LMM). HMM is inactive and heterogeneous in protein composition because of binding nonselectively to cellular RNAs, which in turn are associated with variety of cellular proteins. The LMM form which is enzymatically active has few or no RNAs associated. Its ability to form homooligomer is distinct from its ability to assemble into HMM. Interacts with APOBEC3B, APOBEC3F, MOV10, AGO2, EIF4E, EIF4ENIF1, DCP2 and DDX6 in an RNA-dependent manner. Interacts with AGO1, AGO3 and PKA/PRKACA. Zn(2+) is required as a cofactor.

Its subcellular location is the cytoplasm. It localises to the nucleus. The protein resides in the P-body. It carries out the reaction a 2'-deoxycytidine in single-stranded DNA + H2O + H(+) = a 2'-deoxyuridine in single-stranded DNA + NH4(+). Functionally, DNA deaminase (cytidine deaminase) which acts as an inhibitor of retrovirus replication and retrotransposon mobility. After the penetration of retroviral nucleocapsids into target cells of infection and the initiation of reverse transcription, it can induce the conversion of cytosine to uracil in the minus-sense single-strand viral DNA, leading to G-to-A hypermutations in the subsequent plus-strand viral DNA. The resultant detrimental levels of mutations in the proviral genome, along with a deamination-independent mechanism that works prior to the proviral integration, together exert efficient antiretroviral effects in infected target cells. Selectively targets single-stranded DNA and does not deaminate double-stranded DNA or single- or double-stranded RNA. This Erythrocebus patas (Red guenon) protein is DNA dC-&gt;dU-editing enzyme APOBEC-3G (APOBEC3G).